Consider the following 271-residue polypeptide: uncharacterized protein (271 aa).

The protein belongs to the HAD-like hydrolase superfamily.

This is an uncharacterized protein from Staphylococcus aureus.